Reading from the N-terminus, the 269-residue chain is Growth-regulating factor 11 (269 aa).

Over residues 1–11 (MAAEGEAKKDS) the composition is skewed to basic and acidic residues. Positions 1–71 (MAAEGEAKKD…GKEDVEEGGV (71 aa)) are disordered. A compositionally biased stretch (gly residues) spans 43 to 52 (GEAGGGGGGG). Positions 58 to 68 (EEEEGKEDVEE) are enriched in acidic residues. Positions 114-149 (AFTAMQLQELEQQSRVYQYMAARVPVPTHLVFPIWK) constitute a QLQ domain. The region spanning 180–224 (EPEPGRCRRTDGKKWRCWRNAIANEKYCERHMHRGRKRPVQLVVE) is the WRC domain. 2 short sequence motifs (bipartite nuclear localization signal) span residues 185-195 (RCRRTDGKKWR) and 213-217 (RGRKR). The tract at residues 212-269 (HRGRKRPVQLVVEDDEPDSTSGSKPASGKATEGGKKTDDKSSSSKKLAVAAPAAVEST) is disordered. The span at 243 to 253 (EGGKKTDDKSS) shows a compositional bias: basic and acidic residues. Low complexity predominate over residues 255–269 (SKKLAVAAPAAVEST).

This sequence belongs to the GRF family.

It is found in the nucleus. In terms of biological role, transcription activator that plays a regulatory role in gibberellin-induced stem elongation. This chain is Growth-regulating factor 11 (GRF11), found in Oryza sativa subsp. japonica (Rice).